The primary structure comprises 243 residues: NH(3)-dependent NAD(+) synthetase (243 aa).

An ATP-binding site is contributed by 31-38 (GLSGGVDS). Asp-37 serves as a coordination point for Mg(2+). Arg-116 serves as a coordination point for deamido-NAD(+). Thr-136 is an ATP binding site. Glu-141 contacts Mg(2+). 2 residues coordinate deamido-NAD(+): Lys-149 and Asp-156. 2 residues coordinate ATP: Lys-165 and Ser-187. Residue 233 to 234 (HK) participates in deamido-NAD(+) binding.

The protein belongs to the NAD synthetase family. As to quaternary structure, homodimer.

The catalysed reaction is deamido-NAD(+) + NH4(+) + ATP = AMP + diphosphate + NAD(+) + H(+). It participates in cofactor biosynthesis; NAD(+) biosynthesis; NAD(+) from deamido-NAD(+) (ammonia route): step 1/1. Functionally, catalyzes the ATP-dependent amidation of deamido-NAD to form NAD. Uses ammonia as a nitrogen source. The chain is NH(3)-dependent NAD(+) synthetase from Carboxydothermus hydrogenoformans (strain ATCC BAA-161 / DSM 6008 / Z-2901).